The primary structure comprises 289 residues: MKQYLHLLEHIKTSGTFKKDRTNIGTISLFGLQARYNLKEGFPLLTTKKMAWKAICHELLWFLKGDTNIKYLVDNNVNIWNEWPYEIFKKSNDYQGESLKEFSQKIKEDSSFAQKYGELGPVYGKQWRDFFGVDQISQVINDIKNNPTSRRLIVSAWNVAQIDKMALPPCHAFFQFYVNDNNELSLHLYQRSGDMFLGVPFNIASYSLLLSMVAQVTNLKVGEFIHTIGDAHIYSNHIDQVNTQLERAPYKLPKLILNKNIKNIFDFTFEDIELENYISHETIKAKVAV.

DUMP is bound by residues arginine 21 and 150–151; that span reads RR. Catalysis depends on cysteine 170, which acts as the Nucleophile. Residues 191-194, asparagine 202, and 232-234 each bind dUMP; these read RSGD and HIY. A (6R)-5,10-methylene-5,6,7,8-tetrahydrofolate-binding site is contributed by aspartate 194. (6R)-5,10-methylene-5,6,7,8-tetrahydrofolate is bound at residue alanine 288.

The protein belongs to the thymidylate synthase family. Bacterial-type ThyA subfamily. Homodimer.

It localises to the cytoplasm. The enzyme catalyses dUMP + (6R)-5,10-methylene-5,6,7,8-tetrahydrofolate = 7,8-dihydrofolate + dTMP. It participates in pyrimidine metabolism; dTTP biosynthesis. Its function is as follows. Catalyzes the reductive methylation of 2'-deoxyuridine-5'-monophosphate (dUMP) to 2'-deoxythymidine-5'-monophosphate (dTMP) while utilizing 5,10-methylenetetrahydrofolate (mTHF) as the methyl donor and reductant in the reaction, yielding dihydrofolate (DHF) as a by-product. This enzymatic reaction provides an intracellular de novo source of dTMP, an essential precursor for DNA biosynthesis. The sequence is that of Thymidylate synthase from Mycoplasmopsis synoviae (strain 53) (Mycoplasma synoviae).